The chain runs to 511 residues: Apolipoprotein N-acyltransferase (511 aa).

The next 6 membrane-spanning stretches (helical) occupy residues 7–29, 58–78, 90–110, 125–145, 163–183, and 192–212; these read PGWP…LAPF, GWWY…VSIH, LLML…AWLW, LAFA…LTGF, VPVG…ALLV, and GASL…GLYL. Positions 230–470 constitute a CN hydrolase domain; sequence IQGNIAQELK…QGILRGEVIP (241 aa). E269 (proton acceptor) is an active-site residue. K330 is a catalytic residue. The active-site Nucleophile is C382. The chain crosses the membrane as a helical span at residues 482–502; the sequence is VWPLAGLAGVLLLWALLGRQL.

It belongs to the CN hydrolase family. Apolipoprotein N-acyltransferase subfamily.

It is found in the cell inner membrane. It catalyses the reaction N-terminal S-1,2-diacyl-sn-glyceryl-L-cysteinyl-[lipoprotein] + a glycerophospholipid = N-acyl-S-1,2-diacyl-sn-glyceryl-L-cysteinyl-[lipoprotein] + a 2-acyl-sn-glycero-3-phospholipid + H(+). The protein operates within protein modification; lipoprotein biosynthesis (N-acyl transfer). Functionally, catalyzes the phospholipid dependent N-acylation of the N-terminal cysteine of apolipoprotein, the last step in lipoprotein maturation. This Pseudomonas aeruginosa (strain LESB58) protein is Apolipoprotein N-acyltransferase.